A 291-amino-acid polypeptide reads, in one-letter code: uncharacterized protein (291 aa).

The 99-residue stretch at 191 to 289 (KQMLNWIHLH…NMTPLSYKKM (99 aa)) folds into the HTH araC/xylS-type domain. DNA-binding regions (H-T-H motif) lie at residues 208 to 229 (EDIA…KRML) and 256 to 279 (VTEV…QQAM).

This is an uncharacterized protein from Bacillus subtilis (strain 168).